The primary structure comprises 392 residues: Fasciculation and elongation protein zeta-1 (392 aa).

Positions Met1–His36 are disordered. The residue at position 58 (Ser58) is a Phosphoserine. A disordered region spans residues Met175–Ile196. Over residues Asp180–Gly194 the composition is skewed to acidic residues. Residues Ser230–Ser298 are a coiled coil. Residues Ser298 and Ser316 each carry the phosphoserine modification.

Belongs to the zygin family. As to quaternary structure, homodimer. Interacts with the NH2-terminal variable region (V1) of PKC zeta and weakly with that of PKC epsilon. Interacts with UBE4B and SAP30L. Interacts with SCOC and ULK1; SCOC interferes with ULK1-binding to FEZ1. Directly interacts with SCOC and UVRAG. Stabilizes the interaction between SCOC and UVRAG during amino acid starvation. In terms of processing, phosphorylated by protein kinase C zeta; which enhances interaction with UBE4B and polyubiquitination. Post-translationally, polyubiquitinated in a UBE4B-dependent manner; which does not lead to proteasomal degradation and may be important for neurogenic activity. Polyubiquitin linkage seems to be mainly through Lys-26.

Its subcellular location is the cytoplasm. The protein localises to the cytoskeleton. The protein resides in the microtubule organizing center. It is found in the centrosome. It localises to the cell membrane. May be involved in axonal outgrowth as component of the network of molecules that regulate cellular morphology and axon guidance machinery. May participate in the transport of mitochondria and other cargos along microtubules. The polypeptide is Fasciculation and elongation protein zeta-1 (Fez1) (Mus musculus (Mouse)).